The following is a 681-amino-acid chain: Envelope glycoprotein (681 aa).

An N-terminal signal peptide occupies residues 1–18; the sequence is MKTTCLFISLILIQGIKT. Topologically, residues 19 to 648 are extracellular; sequence LPILEIASNN…GLGGKWWTSD (630 aa). A receptor-binding region spans residues 38–188; it reads SGTLQKTEDV…FSRQGQGYRH (151 aa). N-linked (GlcNAc...) asparagine; by host glycans are attached at residues N94, N171, N190, N202, N207, N219, N223, and N255. The interval 223–351 is disordered; it reads NQTCAPSKIP…STNNTSKNNF (129 aa). Residues 244-259 show a composition bias toward low complexity; that stretch reads PTSTPTDATTLNTTDP. The interval 277–455 is mucin-like region; the sequence is EPYTTSDAVT…PFLDGLINAP (179 aa). Polar residues-rich tracts occupy residues 278–290 and 308–341; these read PYTT…KQGL and EGNN…TTAI. Residues N310, N323, N326, N337, N344, N345, N350, N360, N389, N397, N408, and N487 are each glycosylated (N-linked (GlcNAc...) asparagine; by host). A compositionally biased stretch (low complexity) spans 342–351; sequence STNNTSKNNF. Residues 366–414 show a composition bias toward polar residues; the sequence is TQSTATENEQTSAPSKTTLPPTGNLTTAKSTNNTKGPTTTAPNMTNGHL. A disordered region spans residues 366–425; that stretch reads TQSTATENEQTSAPSKTTLPPTGNLTTAKSTNNTKGPTTTAPNMTNGHLTSPSPTPNPTT. A fusion peptide region spans residues 529–549; the sequence is GLSWIPFFGPGIEGLYTAGLI. N564 and N619 each carry an N-linked (GlcNAc...) asparagine; by host glycan. A helical membrane pass occupies residues 649–669; that stretch reads WGVLTNLGILLLLSIAVLIAL. Over 670-681 the chain is Cytoplasmic; that stretch reads SCICRIFTKYIG. S-palmitoyl cysteine; by host attachment occurs at residues C671 and C673.

The protein belongs to the filoviruses glycoprotein family. In terms of assembly, homotrimer; each monomer consists of a GP1 and a GP2 subunit linked by disulfide bonds. The resulting peplomers (GP1,2) protrude from the virus surface as spikes. GP1,2 interacts with human CD209 and CLEC4M (collectively referred to as DC-SIGN(R)). Asialoglycoprotein receptor (ASGP-R) may be a liver-specific receptor for GP1,2. Members of the Tyro3 receptor tyrosine kinase family may be cell entry factors interacting with GP1,2. In terms of processing, N-glycosylated. O-glycosylated in the mucin-like region. Post-translationally, specific enzymatic cleavages in vivo yield mature proteins. The precursor is processed into GP1 and GP2 by host cell furin in the trans Golgi, and maybe by other host proteases, to yield the mature GP1 and GP2 proteins. The cleavage site corresponds to the furin optimal cleavage sequence [KR]-X-[KR]-R. In terms of processing, GP1 is phosphorylated on serine residues between residues 260 and 273.

It is found in the virion membrane. The protein localises to the host cell membrane. GP1 is responsible for binding to the receptor(s) on target cells. Interacts with CD209/DC-SIGN and CLEC4M/DC-SIGNR which act as cofactors for virus entry into the host cell. Binding to CD209 and CLEC4M, which are respectively found on dendritic cells (DCs), and on endothelial cells of liver sinusoids and lymph node sinuses, facilitate infection of macrophages and endothelial cells. These interactions not only facilitate virus cell entry, but also allow capture of viral particles by DCs and subsequent transmission to susceptible cells without DCs infection (trans infection). In terms of biological role, GP2 acts as a class I viral fusion protein. Under the current model, the protein has at least 3 conformational states: pre-fusion native state, pre-hairpin intermediate state, and post-fusion hairpin state. During viral and target cell membrane fusion, the coiled coil regions (heptad repeats) assume a trimer-of-hairpins structure, positioning the fusion peptide in close proximity to the C-terminal region of the ectodomain. The formation of this structure appears to drive apposition and subsequent fusion of viral and target cell membranes. Responsible for penetration of the virus into the cell cytoplasm by mediating the fusion of the membrane of the endocytosed virus particle with the endosomal membrane. Low pH in endosomes induces an irreversible conformational change in GP2, releasing the fusion hydrophobic peptide. This is Envelope glycoprotein (GP) from Lake Victoria marburgvirus (strain Popp-67) (MARV).